The primary structure comprises 438 residues: Plasmalemma vesicle-associated protein (438 aa).

The Cytoplasmic segment spans residues 1 to 26 (MGLSMDRSPYARTGDQQRGCWYYLRY). The helical; Signal-anchor for type II membrane protein transmembrane segment at 27 to 47 (FFLFVSLIQFLIILGLVLFMI) threads the bilayer. Residues 48 to 438 (YGNVHATTES…VVNPAAQPSG (391 aa)) lie on the Extracellular side of the membrane. N-linked (GlcNAc...) asparagine glycans are attached at residues Asn-82, Asn-88, Asn-112, and Asn-150. Coiled-coil stretches lie at residues 140–160 (KQCQ…LFKL), 189–224 (KRQT…QSLC), and 281–383 (EELA…ISAL). Residues 391–413 (SLPAVPPRVSGPPPNPPPIDPAS) are disordered. The span at 394-410 (AVPPRVSGPPPNPPPID) shows a compositional bias: pro residues.

In terms of assembly, homodimer. Expressed in lung, kidney, spleen, heart, muscle, eye, pancreas, thyroid, thymus, submaxillary gland, prostate, epididymis, uterus and liver.

It localises to the cell membrane. Its subcellular location is the membrane. It is found in the caveola. The protein resides in the cytoplasm. The protein localises to the perinuclear region. Functionally, endothelial cell-specific membrane protein involved in the formation of the diaphragms that bridge endothelial fenestrae. It is also required for the formation of stomata of caveolae and transendothelial channels. Functions in microvascular permeability, endothelial fenestrae contributing to the passage of water and solutes and regulating transcellular versus paracellular flow in different organs. Plays a specific role in embryonic development. This is Plasmalemma vesicle-associated protein (Plvap) from Mus musculus (Mouse).